The primary structure comprises 32 residues: Beta-hexosaminidase (32 aa).

A GH18 domain is found at 1-32 (GKSSSRPLGDATLGDLDFDIEVTQDYWDDLAR). Glu-21 functions as the Proton donor in the catalytic mechanism.

This sequence belongs to the glycosyl hydrolase 18 family. Chitinase class II subfamily.

It carries out the reaction Hydrolysis of terminal non-reducing N-acetyl-D-hexosamine residues in N-acetyl-beta-D-hexosaminides.. Activity is decreased by HgCl(2) and maltose. Activity is stimulated by Na(2)SeO(4), BaCl(2), MgCl(2), chondroitin 6-sulfate and phenylmethylsulfonyl fluoride. In terms of biological role, preferentially hydrolyzes pNP-GlcNAc, hydrolyzes pNP-GalNAc to a lesser extent. This is Beta-hexosaminidase from Palythoa caribaeorum (White encrusting zoanthid coral).